The chain runs to 238 residues: Uridylate kinase (238 aa).

12–15 serves as a coordination point for ATP; the sequence is KLSG. G54 lines the UMP pocket. Residues G55 and R59 each contribute to the ATP site. Residues D74 and 135–142 each bind UMP; that span reads TGNPFFTT. 3 residues coordinate ATP: T162, Y168, and D171.

It belongs to the UMP kinase family. In terms of assembly, homohexamer.

The protein localises to the cytoplasm. It catalyses the reaction UMP + ATP = UDP + ADP. It functions in the pathway pyrimidine metabolism; CTP biosynthesis via de novo pathway; UDP from UMP (UMPK route): step 1/1. With respect to regulation, inhibited by UTP. Catalyzes the reversible phosphorylation of UMP to UDP. The sequence is that of Uridylate kinase from Aromatoleum aromaticum (strain DSM 19018 / LMG 30748 / EbN1) (Azoarcus sp. (strain EbN1)).